An 810-amino-acid polypeptide reads, in one-letter code: Oligoxyloglucan-reducing end-specific xyloglucanase (810 aa).

The first 28 residues, 1-28, serve as a signal peptide directing secretion; sequence MRAKNGPGSWLALTAIATSLNTLALAAA. N-linked (GlcNAc...) asparagine glycosylation occurs at N32. D66 (nucleophile) is an active-site residue. The stretch at 126 to 135 is one BNR 1 repeat; sequence FVSQDRGATF. Residue N188 is glycosylated (N-linked (GlcNAc...) asparagine). One copy of the BNR 2 repeat lies at 226–236; it reads YVTRDSGESWE. N298, N312, and N321 each carry an N-linked (GlcNAc...) asparagine glycan. One copy of the BNR 3 repeat lies at 359–369; it reads YLSHDGGKSWK. A glycan (N-linked (GlcNAc...) asparagine) is linked at N455. The Proton donor role is filled by D498. The N-linked (GlcNAc...) asparagine glycan is linked to N544. A BNR 4 repeat occupies 554–564; it reads YSADGGSSWTK. 2 N-linked (GlcNAc...) asparagine glycosylation sites follow: N573 and N612. Residues 617 to 626 form a BNR 5 repeat; the sequence is YVTTDLGQTW. A glycan (N-linked (GlcNAc...) asparagine) is linked at N638. BNR repeat units follow at residues 658–667, 705–716, and 759–769; these read YLSRDGGLSY, YHTRNFGKKWTK, and YRSDDNGKTWV.

It belongs to the glycosyl hydrolase 74 family.

It localises to the secreted. It carries out the reaction Hydrolysis of cellobiose from the reducing end of xyloglucans consisting of a beta-(1-&gt;4)-linked glucan carrying alpha-D-xylosyl groups on O-6 of the glucose residues. To be a substrate, the first residue must be unsubstituted, the second residue may bear a xylosyl group, whether further glycosylated or not, and the third residue, which becomes the new terminus by the action of the enzyme, is preferably xylosylated, but this xylose residue must not be further substituted.. Its function is as follows. Oligoxyloglucan-reducing end-specific xyloglucanase involved in degradation of xyloglucans. Releases the first two glycosyl segments from oligoxyloglucans. Active against cotton xyloglucan, tamarind xyloglucan and tamarind xyloglucan oligomers. This is Oligoxyloglucan-reducing end-specific xyloglucanase (xgcA) from Emericella nidulans (strain FGSC A4 / ATCC 38163 / CBS 112.46 / NRRL 194 / M139) (Aspergillus nidulans).